A 407-amino-acid polypeptide reads, in one-letter code: Pleckstrin homology-like domain family A member 1 (407 aa).

Composition is skewed to basic and acidic residues over residues 1-11 (MRRTPAAERLS) and 54-63 (RSAEDGREQP). A disordered region spans residues 1 to 67 (MRRTPAAERL…DGREQPAHGS (67 aa)). In terms of domain architecture, PH spans 149–184 (SGCKALKEGVLEKRSDGLLQLWKKKCCILTEEGLLL). 2 disordered regions span residues 188-224 (KQVQ…EPPA) and 296-407 (QQHL…SNSA). Composition is skewed to low complexity over residues 189–204 (QVQH…QPGQ) and 297–319 (QHLV…QPQI). Residues 312–348 (PQPQQPQIQPQPQPQIQPQPQPQPQPQPQPQQQPQPQ) are 15 X 2 AA repeats of P-Q. The span at 320–344 (QPQPQPQIQPQPQPQPQPQPQPQQQ) shows a compositional bias: pro residues. Residues 354–381 (PHPHPHLYPHPHPHAHSHPHPHPHPHPH) are 11 X 2 AA repeats of P-H. The span at 354–384 (PHPHPHLYPHPHPHAHSHPHPHPHPHPHQLQ) shows a compositional bias: basic residues. The span at 385-395 (HAHQPLHSQPQ) shows a compositional bias: low complexity.

In terms of assembly, interacts with RPL14, EIF3S7 and PABPC4.

Its subcellular location is the cytoplasm. The protein resides in the cytoplasmic vesicle. It is found in the nucleus. It localises to the nucleolus. Seems to be involved in regulation of apoptosis. May be involved in detachment-mediated programmed cell death. May mediate apoptosis during neuronal development. May be involved in regulation of anti-apoptotic effects of IGF1. May be involved in translational regulation. This chain is Pleckstrin homology-like domain family A member 1 (Phlda1), found in Rattus norvegicus (Rat).